Reading from the N-terminus, the 90-residue chain is Co-chaperonin GroES (90 aa).

The protein belongs to the GroES chaperonin family. Heptamer of 7 subunits arranged in a ring. Interacts with the chaperonin GroEL.

Its subcellular location is the cytoplasm. Functionally, together with the chaperonin GroEL, plays an essential role in assisting protein folding. The GroEL-GroES system forms a nano-cage that allows encapsulation of the non-native substrate proteins and provides a physical environment optimized to promote and accelerate protein folding. GroES binds to the apical surface of the GroEL ring, thereby capping the opening of the GroEL channel. The chain is Co-chaperonin GroES from Thermosipho melanesiensis (strain DSM 12029 / CIP 104789 / BI429).